The sequence spans 108 residues: Small ribosomal subunit protein uS17 (108 aa).

The interval Met1–Val26 is disordered. Residues Ala8–Ser17 are compositionally biased toward low complexity.

It belongs to the universal ribosomal protein uS17 family. In terms of assembly, part of the 30S ribosomal subunit.

Functionally, one of the primary rRNA binding proteins, it binds specifically to the 5'-end of 16S ribosomal RNA. This is Small ribosomal subunit protein uS17 from Myxococcus xanthus (strain DK1622).